The following is a 551-amino-acid chain: Podocalyxin (551 aa).

The N-terminal stretch at 1–21 is a signal peptide; it reads MRSALALAALLLLLLSPPSLS. Positions 18–324 are disordered; it reads PSLSQEKSPQ…QRVSCGPPER (307 aa). At 22-452 the chain is on the extracellular side; sequence QEKSPQPGPT…PPEETEDRFS (431 aa). Low complexity predominate over residues 32–59; it reads PMATSTSTRPAPASAPAPKSSVAASVPA. Positions 60–90 are enriched in polar residues; it reads EQNTTPMTTKAPATQSPSASPGSSVENSAPA. Positions 91–104 are enriched in low complexity; it reads QGSTTTQQSLSVTT. Positions 142 to 164 are enriched in polar residues; that stretch reads APSNHSITTKPLATEATSQAPRQ. N-linked (GlcNAc...) asparagine glycosylation is found at Asn145 and Asn180. The segment covering 234-244 has biased composition (polar residues); the sequence is PVASSAETQGM. A compositionally biased stretch (low complexity) spans 289-300; the sequence is TSSSTELASTAL. A glycan (N-linked (GlcNAc...) asparagine) is linked at Asn333. Residues 453–473 form a helical membrane-spanning segment; sequence LPLIITIVCMASFLLLVAALY. Residues 474–551 lie on the Cytoplasmic side of the membrane; that stretch reads GCCHQRLSHR…DLDEEEDTHL (78 aa). Thr511 carries the phosphothreonine modification. At Ser530 the chain carries Phosphoserine. The residue at position 549 (Thr549) is a Phosphothreonine.

The protein belongs to the podocalyxin family. In terms of assembly, monomer; when associated with the membrane raft. Oligomer; when integrated in the apical membrane. Found in a complex with EZR, PODXL and NHERF2. Associates with the actin cytoskeleton through complex formation with EZR and NHERF2. Interacts (via the C-terminal PDZ-binding motif DTHL) with NHERF1 (via the PDZ domains); interaction is not detected in glomerular epithelium cells, take place early in the secretory pathway and is necessary for its apical membrane sorting. Interacts (via the C-terminal PDZ-binding motif DTHL) with NHERF2 (via the PDZ 1 domain); interaction is detected in glomerular epithelium cells. Interacts with EZR. N- and O-linked glycosylated. Sialoglycoprotein. As to expression, glomerular epithelium cell (podocyte) and endothelial cells.

Its subcellular location is the apical cell membrane. It localises to the cell projection. The protein resides in the microvillus. It is found in the membrane raft. The protein localises to the lamellipodium. Its subcellular location is the filopodium. It localises to the ruffle. The protein resides in the membrane. Its function is as follows. Involved in the regulation of both adhesion and cell morphology and cancer progression. Functions as an anti-adhesive molecule that maintains an open filtration pathway between neighboring foot processes in the podocyte by charge repulsion. Acts as a pro-adhesive molecule, enhancing the adherence of cells to immobilized ligands, increasing the rate of migration and cell-cell contacts in an integrin-dependent manner. Induces the formation of apical actin-dependent microvilli. Involved in the formation of a preapical plasma membrane subdomain to set up initial epithelial polarization and the apical lumen formation during renal tubulogenesis. Plays a role in cancer development and aggressiveness by inducing cell migration and invasion through its interaction with the actin-binding protein EZR. Affects EZR-dependent signaling events, leading to increased activities of the MAPK and PI3K pathways in cancer cells. This chain is Podocalyxin (PODXL), found in Oryctolagus cuniculus (Rabbit).